The chain runs to 440 residues: C-terminal-binding protein 1 (440 aa).

An interaction with GLIS2 1 region spans residues 1 to 70 (MGSSHLLNKG…EIHEKVLNEA (70 aa)). NAD(+)-binding positions include serine 100, 180–185 (IGLGRV), aspartate 204, 237–243 (CGLNEHN), 264–266 (TAR), and aspartate 290. Arginine 266 is an active-site residue. The interval 288–360 (ALDVHESEPF…VNKDHLTAAT (73 aa)) is interaction with GLIS2 2. The active site involves glutamate 295. Serine 300 is modified (phosphoserine). Histidine 315 acts as the Proton donor in catalysis. 315–318 (HAAW) contributes to the NAD(+) binding site. The disordered stretch occupies residues 408–440 (SHGLPPVAHPPHAPSPGQTVKPEADRDHASDQL). Serine 422 is subject to Phosphoserine; by HIPK2. A Glycyl lysine isopeptide (Lys-Gly) (interchain with G-Cter in SUMO) cross-link involves residue lysine 428. The span at 429–440 (PEADRDHASDQL) shows a compositional bias: basic and acidic residues.

It belongs to the D-isomer specific 2-hydroxyacid dehydrogenase family. Homo- or heterodimer. Heterodimer with CTBP2. Interacts with PRDM16; the interaction represses white adipose tissue (WAT)-specific genes expression. Interacts with GLIS2, FOXP2, HDAC4, HDAC5, HDAC9 and ZNF217. Interacts with ELK3 (via its PXDLS motif). Interacts with RBBP8 (via its PXDLS motif); the interaction is disrupted by binding to adenovirus E1A. Interacts with FOXP1, HIPK2, PNN, NRIP1, MECOM, ZFHX1B and WIZ. Interacts with ZNF366 (via PXDLS motif). Interaction with SATB1 (non-acetylated form); the interaction stabilizes its attachment to DNA and promotes transcription repression. Interacts with BCL6; the interaction is required for BCL6 transcriptional autoinhibition and inhibition of some BCL6 target genes. Interacts with IKZF4. Interacts with MCRIP1 (unphosphorylated form, via the PXDLS motif); competitively inhibiting CTBP-ZEB1 interaction. Interacts with Bassoon/BSN; this interaction targets and anchors CTBP1 to presynapses. Interacts with SIMC1. As to quaternary structure, (Microbial infection) Interacts with Epstein-Barr virus EBNA3. Interacts with Epstein-Barr virus EBNA6; this interaction leads to gene repression, but also seems to interfere with the repressive function of CtBP pre-bound to DNA, leading to EBNA6 mediated up-regulation of many cellular genes. In terms of assembly, (Microbial infection) Interacts with adenovirus E1A protein (via its C-terminus); the interaction disrupts the interaction of CTBP1 with RBBP8. (Microbial infection) Interacts with human adenovirus 5 E1A protein; this interaction seems to potentiate viral replication. NAD(+) is required as a cofactor. Post-translationally, the level of phosphorylation appears to be regulated during the cell cycle. Phosphorylation by HIPK2 on Ser-422 induces proteasomal degradation. ADP-ribosylated; when cells are exposed to brefeldin A. In terms of processing, sumoylation on Lys-428 is promoted by the E3 SUMO-protein ligase CBX4. Expressed in germinal center B-cells.

Its subcellular location is the cytoplasm. The protein localises to the nucleus. Corepressor targeting diverse transcription regulators such as GLIS2 or BCL6. Has dehydrogenase activity. Involved in controlling the equilibrium between tubular and stacked structures in the Golgi complex. Functions in brown adipose tissue (BAT) differentiation. The polypeptide is C-terminal-binding protein 1 (CTBP1) (Homo sapiens (Human)).